Reading from the N-terminus, the 430-residue chain is Phosphoribosylamine--glycine ligase (430 aa).

Residues 109-314 (RGLMNKYGID…FLTIAEHIIN (206 aa)) enclose the ATP-grasp domain. 136-192 (IREYPGDLAVKPTGLTGGKGVKVMGEQVDREGAVEYAMTLKDQVIILEERLLGEEFT) contributes to the ATP binding site. 3 residues coordinate Mg(2+): Q272, E284, and N286. Q272, E284, and N286 together coordinate Mn(2+).

It belongs to the GARS family. Mg(2+) serves as cofactor. It depends on Mn(2+) as a cofactor.

It catalyses the reaction 5-phospho-beta-D-ribosylamine + glycine + ATP = N(1)-(5-phospho-beta-D-ribosyl)glycinamide + ADP + phosphate + H(+). The protein operates within purine metabolism; IMP biosynthesis via de novo pathway; N(1)-(5-phospho-D-ribosyl)glycinamide from 5-phospho-alpha-D-ribose 1-diphosphate: step 2/2. This Methanocorpusculum labreanum (strain ATCC 43576 / DSM 4855 / Z) protein is Phosphoribosylamine--glycine ligase.